Here is a 197-residue protein sequence, read N- to C-terminus: A-kinase anchor protein 14 (197 aa).

Composition is skewed to polar residues over residues 1-11 and 19-29; these read MSETQNSTSQK and AASQTMPNTQD. The disordered stretch occupies residues 1 to 29; that stretch reads MSETQNSTSQKAMDEDNKAASQTMPNTQD. Residues 35–52 form an RII-binding region; the sequence is ELTQVALALVEDVINYAV.

In terms of assembly, binds to type II regulatory subunits (RII). Present in cilia (at protein level). Expressed in tissues containing axoneme-based organelles (cilia and/or flagella): trachea and testis. Highly expressed in airway cilia.

Its subcellular location is the cytoplasm. Functionally, binds to type II regulatory subunits of protein kinase A and anchors/targets them. The chain is A-kinase anchor protein 14 (AKAP14) from Homo sapiens (Human).